A 364-amino-acid chain; its full sequence is tRNA-specific 2-thiouridylase MnmA (364 aa).

ATP contacts are provided by residues 6 to 13 and Leu-32; that span reads AMSGGVDS. Cys-101 serves as the catalytic Nucleophile. Cys-101 and Cys-193 form a disulfide bridge. ATP is bound at residue Gly-125. Residues 143-145 form an interaction with tRNA region; sequence KDQ. The Cysteine persulfide intermediate role is filled by Cys-193.

The protein belongs to the MnmA/TRMU family.

The protein localises to the cytoplasm. It carries out the reaction S-sulfanyl-L-cysteinyl-[protein] + uridine(34) in tRNA + AH2 + ATP = 2-thiouridine(34) in tRNA + L-cysteinyl-[protein] + A + AMP + diphosphate + H(+). Its function is as follows. Catalyzes the 2-thiolation of uridine at the wobble position (U34) of tRNA, leading to the formation of s(2)U34. In Rhodococcus jostii (strain RHA1), this protein is tRNA-specific 2-thiouridylase MnmA.